A 228-amino-acid polypeptide reads, in one-letter code: uncharacterized protein (228 aa).

To E.coli YbfG.

This is an uncharacterized protein from Haemophilus influenzae (strain ATCC 51907 / DSM 11121 / KW20 / Rd).